A 794-amino-acid polypeptide reads, in one-letter code: Copper amine oxidase-like protein cao2 (794 aa).

Residues 307 to 318 (AYDLGEYGVGYR) and 391 to 396 (AANYEY) each bind substrate. The active-site Proton acceptor is aspartate 309. Tyrosine 394 (schiff-base intermediate with substrate; via topaquinone) is an active-site residue. Tyrosine 394 carries the 2',4',5'-topaquinone modification. The Cu cation site is built by histidine 445 and histidine 447. The tract at residues 563–584 (GDYAPQASDDTPKGLSKWISDD) is disordered. Positions 593 and 594 each coordinate Mn(2+). Histidine 604 is a Cu cation binding site. A disordered region spans residues 634-748 (ALDTSSSVNS…NGGHHHHHHH (115 aa)). The span at 637–649 (TSSSVNSTSEATS) shows a compositional bias: low complexity. The segment covering 652 to 714 (THHENLRDTS…DAAQKHEGRS (63 aa)) has biased composition (basic and acidic residues). Residues 716-727 (TLAQPGQQNANQ) are compositionally biased toward polar residues.

This sequence belongs to the copper/topaquinone oxidase family. In terms of assembly, homodimer. Cu cation is required as a cofactor. It depends on Zn(2+) as a cofactor. The cofactor is L-topaquinone. Mn(2+) serves as cofactor. Post-translationally, topaquinone (TPQ) is generated by copper-dependent autoxidation of a specific tyrosyl residue.

It localises to the cytoplasm. It catalyses the reaction a primary methyl amine + O2 + H2O = an aldehyde + H2O2 + NH4(+). Its function is as follows. Copper amine oxidase-like protein that does not show any copper amine oxidase activity. May be the appropriate amine substrate for cao2 has not been identified yet. This chain is Copper amine oxidase-like protein cao2 (cao2), found in Schizosaccharomyces pombe (strain 972 / ATCC 24843) (Fission yeast).